Here is a 412-residue protein sequence, read N- to C-terminus: Phospholipase A1-IIdelta (412 aa).

N-acetylalanine is present on alanine 2. Catalysis depends on serine 238, which acts as the Acyl-ester intermediate. Catalysis depends on charge relay system residues serine 238, aspartate 297, and histidine 336.

This sequence belongs to the AB hydrolase superfamily. Lipase family. As to expression, expressed in leaves, stems, flowers and siliques, and, at low levels, in seeds and roots (at protein level).

The protein resides in the cytoplasm. Acylhydrolase that catalyzes the hydrolysis of phosphatidylcholine (PC) at the sn-1 position. High activity toward PC, medium activity toward monogalactosyldiacylglycerol (MGDG) and low activity toward triacylglycerol (TAG). Confers sensitivity to UV-B radiation probably by deesterifying membrane phospholipids. This is Phospholipase A1-IIdelta from Arabidopsis thaliana (Mouse-ear cress).